A 341-amino-acid chain; its full sequence is tRNA N6-adenosine threonylcarbamoyltransferase (341 aa).

H111 and H115 together coordinate Fe cation. Substrate contacts are provided by residues L134 to G138, D167, G180, and N276. D304 is a Fe cation binding site.

It belongs to the KAE1 / TsaD family. Requires Fe(2+) as cofactor.

The protein resides in the cytoplasm. The enzyme catalyses L-threonylcarbamoyladenylate + adenosine(37) in tRNA = N(6)-L-threonylcarbamoyladenosine(37) in tRNA + AMP + H(+). Functionally, required for the formation of a threonylcarbamoyl group on adenosine at position 37 (t(6)A37) in tRNAs that read codons beginning with adenine. Is involved in the transfer of the threonylcarbamoyl moiety of threonylcarbamoyl-AMP (TC-AMP) to the N6 group of A37, together with TsaE and TsaB. TsaD likely plays a direct catalytic role in this reaction. This chain is tRNA N6-adenosine threonylcarbamoyltransferase, found in Pseudomonas entomophila (strain L48).